Reading from the N-terminus, the 308-residue chain is Baculoviral IAP repeat-containing protein bir-2 (308 aa).

BIR repeat units follow at residues arginine 27–methionine 98 and arginine 170–lysine 241. Positions 68, 71, 87, 94, 211, 214, 230, and 237 each coordinate Zn(2+).

The protein belongs to the IAP family.

This chain is Baculoviral IAP repeat-containing protein bir-2, found in Caenorhabditis elegans.